The chain runs to 186 residues: Probable chorismate pyruvate-lyase (186 aa).

The substrate site is built by Arg77, Leu115, and Glu174.

The protein belongs to the UbiC family.

It is found in the cytoplasm. The enzyme catalyses chorismate = 4-hydroxybenzoate + pyruvate. The protein operates within cofactor biosynthesis; ubiquinone biosynthesis. In terms of biological role, removes the pyruvyl group from chorismate, with concomitant aromatization of the ring, to provide 4-hydroxybenzoate (4HB) for the ubiquinone pathway. The polypeptide is Probable chorismate pyruvate-lyase (Shewanella sp. (strain W3-18-1)).